Here is a 681-residue protein sequence, read N- to C-terminus: uncharacterized protein (681 aa).

This sequence in the N-terminal section; belongs to the purine/pyrimidine phosphoribosyltransferase family.

This is an uncharacterized protein from Mycobacterium tuberculosis (strain CDC 1551 / Oshkosh).